Here is a 326-residue protein sequence, read N- to C-terminus: Glyoxalase I (326 aa).

2 consecutive VOC domains span residues 22-167 (LLNH…LITY) and 182-322 (KFNH…VVPH). His-25 serves as a coordination point for Zn(2+). Arg-29 provides a ligand contact to substrate. Glu-89 serves as a coordination point for Zn(2+). Residues Asn-93, Arg-113, His-117, and 147–148 (RQ) contribute to the substrate site. His-117 contributes to the Zn(2+) binding site. Glu-163 serves as a coordination point for Zn(2+). Active-site proton donor/acceptor residues include Glu-163 and Glu-318.

It belongs to the glyoxalase I family. As to quaternary structure, monomer. The cofactor is Zn(2+).

The enzyme catalyses (R)-S-lactoylglutathione = methylglyoxal + glutathione. It participates in secondary metabolite metabolism; methylglyoxal degradation; (R)-lactate from methylglyoxal: step 1/2. In terms of biological role, catalyzes the conversion of hemimercaptal, formed from methylglyoxal and glutathione, to S-lactoylglutathione. Can use gamma-glutamylcysteine as a substrate. This chain is Glyoxalase I, found in Saccharomyces cerevisiae (strain ATCC 204508 / S288c) (Baker's yeast).